The primary structure comprises 182 residues: Dirigent protein 1 (182 aa).

Positions 1 to 24 (MAKRFLLLLPLLSSILLLAVSVTA) are cleaved as a signal peptide. Asn-125 carries an N-linked (GlcNAc...) asparagine glycan.

This sequence belongs to the plant dirigent protein family. In terms of assembly, homodimer.

It localises to the secreted. It is found in the extracellular space. Its subcellular location is the apoplast. Its function is as follows. Dirigent proteins impart stereoselectivity on the phenoxy radical-coupling reaction, yielding optically active lignans from two molecules of coniferyl alcohol in the biosynthesis of lignans, flavonolignans, and alkaloids and thus plays a central role in plant secondary metabolism. The protein is Dirigent protein 1 (DIR1) of Arabidopsis thaliana (Mouse-ear cress).